Reading from the N-terminus, the 165-residue chain is Ribosome maturation factor RimM (165 aa).

In terms of domain architecture, PRC barrel spans 94 to 165; the sequence is EDEFYIADLT…YVILNYQREA (72 aa).

Belongs to the RimM family. As to quaternary structure, binds ribosomal protein uS19.

It localises to the cytoplasm. An accessory protein needed during the final step in the assembly of 30S ribosomal subunit, possibly for assembly of the head region. Essential for efficient processing of 16S rRNA. May be needed both before and after RbfA during the maturation of 16S rRNA. It has affinity for free ribosomal 30S subunits but not for 70S ribosomes. This Rickettsia rickettsii (strain Iowa) protein is Ribosome maturation factor RimM.